The sequence spans 457 residues: Cell division cycle 20.1, cofactor of APC complex (457 aa).

7 WD repeats span residues 138 to 175 (VDDF…TSEL), 180 to 219 (EEKG…QLRT), 223 to 260 (GHQS…PIVE), 264 to 303 (GHTQ…SNST), 312 to 354 (EHTS…CLNS), 356 to 397 (DTGS…KMAE), and 400 to 439 (GHTS…ETAK).

Belongs to the WD repeat CDC20/Fizzy family. The APC/C is composed of at least 11 subunits that stay tightly associated throughout the cell cycle. Interacts with APC10, FZR1, FZR2, FZR3. Binds to GIG1 and PYM. Part of the mitotic checkpoint complex (MCC); interacts with MAD2, BUB3.1, BUBR1 and BUB1. Binds to cyclins CYCA1-2, CYCB2-1 and CYCB2-2. Interacts with PANS1. As to expression, expressed in meristems and organ primordia. Present in flowers, leaves, stems, roots, pollen grains and developing seeds.

The protein localises to the nucleus. It participates in protein modification; protein ubiquitination. Its function is as follows. Component of the anaphase promoting complex/cyclosome (APC/C), a cell cycle-regulated E3 ubiquitin-protein ligase complex that controls progression through mitosis and the G1 phase of the cell cycle. The sequence is that of Cell division cycle 20.1, cofactor of APC complex (CDC20-1) from Arabidopsis thaliana (Mouse-ear cress).